Here is a 322-residue protein sequence, read N- to C-terminus: Crystallin J1B (322 aa).

Belongs to the ADP-ribosylglycohydrolase family. J1 crystallin subfamily. As to expression, expressed in the rhopalia. Present in both the large and small eyes.

This is Crystallin J1B from Tripedalia cystophora (Jellyfish).